Consider the following 512-residue polypeptide: Calcium-dependent protein kinase 18 (512 aa).

The segment at 1-25 (MGLCSSSSARRDAGTPGGGNGAGNK) is disordered. Residue Gly2 is the site of N-myristoyl glycine attachment. A Protein kinase domain is found at 52-312 (YALGKLLGHG…AAQALSHEWV (261 aa)). Residues 58 to 66 (LGHGQFGYT) and Lys81 contribute to the ATP site. Asp178 (proton acceptor) is an active-site residue. Positions 318 to 348 (ASDIPLDISVLHNMRQFVKYSRFKQFALRAL) are autoinhibitory domain. 4 consecutive EF-hand domains span residues 355–390 (EELS…DVPW), 392–427 (LKGP…VHQL), 434–469 (KWKS…KGSI), and 472–499 (LLEE…ASMS). Ca(2+) is bound by residues Asp368, Asp370, Asn372, Thr374, Glu379, Asp405, Asn407, Asp409, Glu416, Asp447, Asp449, Asp451, Tyr453, Glu458, Asp477, Asp479, Asp481, Lys483, and Glu488.

It belongs to the protein kinase superfamily. Ser/Thr protein kinase family. CDPK subfamily. As to quaternary structure, interacts with MPK5. In terms of processing, autophosphorylated. Phosphorylated by MPK5.

Its subcellular location is the cell membrane. It carries out the reaction L-seryl-[protein] + ATP = O-phospho-L-seryl-[protein] + ADP + H(+). The enzyme catalyses L-threonyl-[protein] + ATP = O-phospho-L-threonyl-[protein] + ADP + H(+). Activated by calcium. Autophosphorylation may play an important role in the regulation of the kinase activity. Its function is as follows. May play a role in signal transduction pathways that involve calcium as a second messenger. Functions upstream of MPK5 in a signaling pathway that represses defense gene expression and negatively regulates resistance to rice blast fungus. Phosphorylates MPK5 at Thr-14 and Thr-32 and activates MPK5 independently of MAP kinase kinase (MKK) phosphorylation. May be involved in arbuscular mycorrhizal presymbiotic phase signaling. Phosphorylates the elicitor-responsive protein ERG1 in vitro. Phosphorylation is calcium-dependent. This is Calcium-dependent protein kinase 18 from Oryza sativa subsp. japonica (Rice).